The primary structure comprises 610 residues: Dihydroxy-acid dehydratase (610 aa).

D81 serves as a coordination point for Mg(2+). Residue C122 coordinates [2Fe-2S] cluster. Mg(2+) is bound by residues D123 and K124. At K124 the chain carries N6-carboxylysine. C196 is a binding site for [2Fe-2S] cluster. E492 is a Mg(2+) binding site. The Proton acceptor role is filled by S518.

This sequence belongs to the IlvD/Edd family. Homodimer. The cofactor is [2Fe-2S] cluster. Mg(2+) serves as cofactor.

It carries out the reaction (2R)-2,3-dihydroxy-3-methylbutanoate = 3-methyl-2-oxobutanoate + H2O. The enzyme catalyses (2R,3R)-2,3-dihydroxy-3-methylpentanoate = (S)-3-methyl-2-oxopentanoate + H2O. It participates in amino-acid biosynthesis; L-isoleucine biosynthesis; L-isoleucine from 2-oxobutanoate: step 3/4. Its pathway is amino-acid biosynthesis; L-valine biosynthesis; L-valine from pyruvate: step 3/4. Functionally, functions in the biosynthesis of branched-chain amino acids. Catalyzes the dehydration of (2R,3R)-2,3-dihydroxy-3-methylpentanoate (2,3-dihydroxy-3-methylvalerate) into 2-oxo-3-methylpentanoate (2-oxo-3-methylvalerate) and of (2R)-2,3-dihydroxy-3-methylbutanoate (2,3-dihydroxyisovalerate) into 2-oxo-3-methylbutanoate (2-oxoisovalerate), the penultimate precursor to L-isoleucine and L-valine, respectively. The protein is Dihydroxy-acid dehydratase of Ruegeria pomeroyi (strain ATCC 700808 / DSM 15171 / DSS-3) (Silicibacter pomeroyi).